Consider the following 302-residue polypeptide: Zinc finger protein-like 1 homolog (302 aa).

Residues 1–43 (MGLCKCPKRLVTNQFCFEHRVNVCEHCMVQSHPKCIVQSYLQW) form a B box-type; degenerate zinc finger. Residues 53 to 101 (CNLCGTSLEQGECVRLVCYHVFHWDCLNARQAALPANTAPRGHQCPGCS) form an RING-type; atypical zinc finger. A disordered region spans residues 168–233 (IHSGGERERG…RDDNKYQRRT (66 aa)). Over residues 198 to 208 (PPSSGDFNASS) the composition is skewed to polar residues. Ser-217 is subject to Phosphoserine. The chain crosses the membrane as a helical span at residues 258 to 278 (WFLVLSGILAFVMFIYLLAWM).

The protein belongs to the ZFPL1 family.

It is found in the membrane. This is Zinc finger protein-like 1 homolog from Drosophila pseudoobscura pseudoobscura (Fruit fly).